We begin with the raw amino-acid sequence, 82 residues long: Cytochrome b559 subunit alpha (82 aa).

Residues 22–36 (IIHAVALPAIFVAGF) traverse the membrane as a helical segment. Histidine 24 provides a ligand contact to heme.

This sequence belongs to the PsbE/PsbF family. Heterodimer of an alpha subunit and a beta subunit. PSII is composed of 1 copy each of membrane proteins PsbA, PsbB, PsbC, PsbD, PsbE, PsbF, PsbH, PsbI, PsbJ, PsbK, PsbL, PsbM, PsbT, PsbX, PsbY, Psb30/Ycf12, peripheral proteins PsbO, CyanoQ (PsbQ), PsbU, PsbV and a large number of cofactors. It forms dimeric complexes. Requires heme b as cofactor.

Its subcellular location is the cellular thylakoid membrane. Functionally, this b-type cytochrome is tightly associated with the reaction center of photosystem II (PSII). PSII is a light-driven water:plastoquinone oxidoreductase that uses light energy to abstract electrons from H(2)O, generating O(2) and a proton gradient subsequently used for ATP formation. It consists of a core antenna complex that captures photons, and an electron transfer chain that converts photonic excitation into a charge separation. The protein is Cytochrome b559 subunit alpha of Prochlorococcus marinus (strain NATL1A).